The following is a 494-amino-acid chain: Probable cytosol aminopeptidase (494 aa).

Positions 260 and 265 each coordinate Mn(2+). K272 is a catalytic residue. D283, D342, and E344 together coordinate Mn(2+). Residue R346 is part of the active site.

Belongs to the peptidase M17 family. Requires Mn(2+) as cofactor.

It is found in the cytoplasm. It catalyses the reaction Release of an N-terminal amino acid, Xaa-|-Yaa-, in which Xaa is preferably Leu, but may be other amino acids including Pro although not Arg or Lys, and Yaa may be Pro. Amino acid amides and methyl esters are also readily hydrolyzed, but rates on arylamides are exceedingly low.. The catalysed reaction is Release of an N-terminal amino acid, preferentially leucine, but not glutamic or aspartic acids.. Presumably involved in the processing and regular turnover of intracellular proteins. Catalyzes the removal of unsubstituted N-terminal amino acids from various peptides. The protein is Probable cytosol aminopeptidase of Bacillus mycoides (strain KBAB4) (Bacillus weihenstephanensis).